A 650-amino-acid polypeptide reads, in one-letter code: Probable protein phosphatase 2C 36 (650 aa).

The tract at residues 146 to 166 (SGKKTKEKAKLKKSGSKSFTK) is disordered. Residues 148–166 (KKTKEKAKLKKSGSKSFTK) are compositionally biased toward basic residues. The region spanning 239–641 (ESALEEPKIQ…DDVSVIVISL (403 aa)) is the PPM-type phosphatase domain. Residues Asp-276, Gly-277, Asp-569, and Asp-632 each contribute to the Mn(2+) site.

The protein belongs to the PP2C family. Mg(2+) serves as cofactor. Mn(2+) is required as a cofactor.

The protein localises to the nucleus. It carries out the reaction O-phospho-L-seryl-[protein] + H2O = L-seryl-[protein] + phosphate. It catalyses the reaction O-phospho-L-threonyl-[protein] + H2O = L-threonyl-[protein] + phosphate. This is Probable protein phosphatase 2C 36 (PLL3) from Arabidopsis thaliana (Mouse-ear cress).